The sequence spans 476 residues: mRNA cap guanine-N(7) methyltransferase (476 aa).

Residues 1–14 (MANSAKAEEYEKMS) are compositionally biased toward basic and acidic residues. Residues 1–146 (MANSAKAEEY…KQKNLEEGHS (146 aa)) are disordered. A compositionally biased stretch (polar residues) spans 20–50 (ASVNSETESSFNINENTTASGTGLSEKTSVC). A phosphoserine mark is found at Ser24, Ser28, and Ser29. Composition is skewed to basic and acidic residues over residues 54-68 (DIAR…DLVK) and 84-118 (LDPE…DKSS). Ser118 is modified (phosphoserine). A Nuclear localization signal motif is present at residues 126 to 128 (KRK). Residues 129-145 (IALEDVPEKQKNLEEGH) are compositionally biased toward basic and acidic residues. The region spanning 167–475 (SRIFYLRNFN…IYLVFAFEKQ (309 aa)) is the mRNA cap 0 methyltransferase domain. 176 to 177 (NN) is a binding site for mRNA. Residues Lys180, Gly205, Asp227, Asp261, Gln284, and Tyr289 each coordinate S-adenosyl-L-methionine.

This sequence belongs to the class I-like SAM-binding methyltransferase superfamily. mRNA cap 0 methyltransferase family. In terms of assembly, interacts with importin alpha, leading to stimulate both RNA-binding and methyltransferase activity. Interaction with importin alpha and beta is required for its nuclear localization, importin beta dissociating in response to RanGTP, allowing RNMT-importin alpha to bind RNA substrates. Interacts with elongating form of polymerase II and RNGTT. Interacts with RAMAC, this interaction significantly enhances RNA-binding and cap methyltransferase activity. As to expression, widely expressed.

It is found in the nucleus. The enzyme catalyses a 5'-end (5'-triphosphoguanosine)-ribonucleoside in mRNA + S-adenosyl-L-methionine = a 5'-end (N(7)-methyl 5'-triphosphoguanosine)-ribonucleoside in mRNA + S-adenosyl-L-homocysteine. Its activity is regulated as follows. Methyltransferase activity is activated by RAMAC. Catalytic subunit of the mRNA-capping methyltransferase RNMT:RAMAC complex that methylates the N7 position of the added guanosine to the 5'-cap structure of mRNAs. Binds RNA containing 5'-terminal GpppC. The polypeptide is mRNA cap guanine-N(7) methyltransferase (RNMT) (Homo sapiens (Human)).